The following is a 303-amino-acid chain: MTTIESQCSIDGILLLNKPQGMTSNAALQKAKHLFGAKKAGHTGSLDPLATGMLPLCFGEATKICQYLLNADKSYETIGRLGSKTNTADCTGEVIFCIENYTVSHEEMIATLEKYKGKIKQIPSMFSALKHKGTPLYRLAREGIEIERKARDIVISQLKLEQFDGECFTLTVSCSKGTYIRNLVEDIGDTLKAGAHMTKLHRLYTAGFENNRMYTLDELQDMPLSQRLACLIPIDQAIQHLTPVILSDSEVTAIRQGKVISNKTGAVEGEDLRLYGEQSQFIGIGQALIHGDIKAKRLVSFAL.

Aspartate 47 acts as the Nucleophile in catalysis.

It belongs to the pseudouridine synthase TruB family. Type 1 subfamily.

The enzyme catalyses uridine(55) in tRNA = pseudouridine(55) in tRNA. Its function is as follows. Responsible for synthesis of pseudouridine from uracil-55 in the psi GC loop of transfer RNAs. In Legionella pneumophila (strain Paris), this protein is tRNA pseudouridine synthase B.